Here is a 359-residue protein sequence, read N- to C-terminus: Glycerol-1-phosphate dehydrogenase [NAD(P)+] (359 aa).

NAD(+) contacts are provided by residues 107-111 (GRVID) and 129-132 (TAAS). Residue aspartate 134 participates in substrate binding. Serine 138 lines the NAD(+) pocket. Residue aspartate 181 coordinates substrate. Zn(2+)-binding residues include aspartate 181 and histidine 261. Position 265 (histidine 265) interacts with substrate. Residue histidine 277 coordinates Zn(2+).

The protein belongs to the glycerol-1-phosphate dehydrogenase family. It depends on Zn(2+) as a cofactor.

It localises to the cytoplasm. The enzyme catalyses sn-glycerol 1-phosphate + NAD(+) = dihydroxyacetone phosphate + NADH + H(+). It catalyses the reaction sn-glycerol 1-phosphate + NADP(+) = dihydroxyacetone phosphate + NADPH + H(+). Its pathway is membrane lipid metabolism; glycerophospholipid metabolism. Functionally, catalyzes the NAD(P)H-dependent reduction of dihydroxyacetonephosphate (DHAP or glycerone phosphate) to glycerol 1-phosphate (G1P). The G1P thus generated is used as the glycerophosphate backbone of phospholipids in the cellular membranes of Archaea. The chain is Glycerol-1-phosphate dehydrogenase [NAD(P)+] from Methanoregula boonei (strain DSM 21154 / JCM 14090 / 6A8).